Consider the following 336-residue polypeptide: D-alanine--D-alanine ligase (336 aa).

An ATP-grasp domain is found at 124 to 330 (KMWFSALGIP…FATFLEQAIL (207 aa)). 154–209 (AFDEWGSVFIKAASQGSSVGCFPAHRREDIPGLVRKAFEYAPFVVVEKTIKARELE) contributes to the ATP binding site. Positions 284, 297, and 299 each coordinate Mg(2+).

Belongs to the D-alanine--D-alanine ligase family. Mg(2+) serves as cofactor. Mn(2+) is required as a cofactor.

The protein localises to the cytoplasm. The enzyme catalyses 2 D-alanine + ATP = D-alanyl-D-alanine + ADP + phosphate + H(+). Its pathway is cell wall biogenesis; peptidoglycan biosynthesis. In terms of biological role, cell wall formation. This is D-alanine--D-alanine ligase from Shewanella amazonensis (strain ATCC BAA-1098 / SB2B).